The sequence spans 366 residues: Polyamine aminopropyltransferase 2 (366 aa).

Basic and acidic residues predominate over residues 20-58; sequence KDKRSELDSDKFELEQQDKHDIQDKQDKQDEQNKQDKQV. A disordered region spans residues 20–61; that stretch reads KDKRSELDSDKFELEQQDKHDIQDKQDKQDEQNKQDKQVQSE. In terms of domain architecture, PABS spans 74 to 305; sequence DVWDEISLKE…TDWGFHLATN (232 aa). Glutamine 100 contacts S-methyl-5'-thioadenosine. Residues histidine 129 and aspartate 153 each coordinate spermidine. Residues aspartate 173 and 207–208 each bind S-methyl-5'-thioadenosine; that span reads DA. The Proton acceptor role is filled by aspartate 225.

It belongs to the spermidine/spermine synthase family. Homodimer or homotetramer.

The protein resides in the cytoplasm. The catalysed reaction is S-adenosyl 3-(methylsulfanyl)propylamine + putrescine = S-methyl-5'-thioadenosine + spermidine + H(+). It functions in the pathway amine and polyamine biosynthesis; spermidine biosynthesis; spermidine from putrescine: step 1/1. Catalyzes the irreversible transfer of a propylamine group from the amino donor S-adenosylmethioninamine (decarboxy-AdoMet) to putrescine (1,4-diaminobutane) to yield spermidine. The chain is Polyamine aminopropyltransferase 2 from Bacillus cereus (strain ATCC 14579 / DSM 31 / CCUG 7414 / JCM 2152 / NBRC 15305 / NCIMB 9373 / NCTC 2599 / NRRL B-3711).